Consider the following 1829-residue polypeptide: Unconventional myosin-Va (1829 aa).

The 53-residue stretch at Thr8–Pro60 folds into the Myosin N-terminal SH3-like domain. The Myosin motor domain occupies Val69–Ala764. Gly163–Thr170 provides a ligand contact to ATP. The interval Ala599–Thr635 is disordered. Residues Leu644 to Asp666 form an actin-binding region. 6 consecutive IQ domains span residues Leu767–Arg789, Met790–Arg814, Arg815–Cys837, Met838–Leu862, Arg863–Leu887, and Lys888–Ser915. 2 coiled-coil regions span residues Val916–Thr1239 and Gly1315–Val1419. 2 disordered regions span residues Ile1106–Lys1148 and Lys1170–Gly1199. A compositionally biased stretch (polar residues) spans Thr1117–Ile1131. 2 stretches are compositionally biased toward basic and acidic residues: residues Leu1137–Lys1148 and Lys1170–Pro1196. Residues Thr1508–Asp1784 form the Dilute domain. Position 1734 is a phosphothreonine (Thr1734).

This sequence belongs to the TRAFAC class myosin-kinesin ATPase superfamily. Myosin family. In terms of assembly, may be a homodimer, which associates with multiple calmodulin or myosin light chains. In terms of tissue distribution, neuronal and non-neuronal cells of the brain.

Its subcellular location is the golgi apparatus membrane. It carries out the reaction ATP + H2O = ADP + phosphate + H(+). Functionally, processive actin-based motor that can move in large steps approximating the 36-nm pseudo-repeat of the actin filament. Can hydrolyze ATP in the presence of actin, which is essential for its function as a motor protein. Involved in melanosome transport. Also mediates the transport of vesicles to the plasma membrane. May also be required for some polarization process involved in dendrite formation. The protein is Unconventional myosin-Va (MYO5A) of Gallus gallus (Chicken).